The sequence spans 403 residues: MANIVVKKLNSTPIEELPVEIVERKGIGHPDSICDGIAEAVSVALCKMYKEKMGAVLHHNTDQVELVGGYAYPSLGGGDIVNPIYVLLSGRATTEVFDKEKCETIRLPVGTVAVNAAREYIKNTIINLDVEKDIVVDCRIGQGSVDLVGVFDRENSIPLANDTSFGVGHAPFSTTENLVLKTEQLLNSKEIKKEIPAIGEDIKVMGLREGKKITLTIAMATVDKYVNSVEEYEEIKAKAKAKVEELAKEYADGYEIEVFVNTADSDNCIFLTVSGTSAEMGDDGSVGRGNRANGLITPFRPMSMEATSGKNPINHIGKLYNILANIIANDVAKIEGVNECHVRILSQIGKPVNEPKILDIELITDEGYDVADIEPKANEIAEYWLNNIEEVREKLMTGEIKTF.

Residue 141 to 146 (GQGSVD) participates in ATP binding.

The protein belongs to the AdoMet synthase 2 family. It depends on Mg(2+) as a cofactor.

It carries out the reaction L-methionine + ATP + H2O = S-adenosyl-L-methionine + phosphate + diphosphate. It participates in amino-acid biosynthesis; S-adenosyl-L-methionine biosynthesis; S-adenosyl-L-methionine from L-methionine: step 1/1. In terms of biological role, catalyzes the formation of S-adenosylmethionine from methionine and ATP. The chain is S-adenosylmethionine synthase from Methanococcus aeolicus (strain ATCC BAA-1280 / DSM 17508 / OCM 812 / Nankai-3).